The chain runs to 356 residues: Glutamine synthetase N-1 (356 aa).

The region spanning 19-99 is the GS beta-grasp domain; the sequence is VIAEYIWVGG…VMCDAYTPAG (81 aa). The GS catalytic domain occupies 106–356; the sequence is KRHNAAKIFS…IAETTLLWKP (251 aa).

It belongs to the glutamine synthetase family. As to quaternary structure, homooctamer. In terms of tissue distribution, this is a nodule isozyme.

It is found in the cytoplasm. It carries out the reaction L-glutamate + NH4(+) + ATP = L-glutamine + ADP + phosphate + H(+). This Phaseolus vulgaris (Kidney bean) protein is Glutamine synthetase N-1 (Gln-gamma).